The primary structure comprises 36 residues: Pancreatic polypeptide (36 aa).

The residue at position 36 (Y36) is a Tyrosine amide.

It belongs to the NPY family.

The protein resides in the secreted. Functionally, hormone secreted by pancreatic cells that acts as a regulator of pancreatic and gastrointestinal functions probably by signaling through the G protein-coupled receptor NPY4R2. The sequence is that of Pancreatic polypeptide (PPY) from Macaca mulatta (Rhesus macaque).